A 264-amino-acid polypeptide reads, in one-letter code: MSSSDNYRLDGKVALVTGAGRGIGAAIAVALGQRGAKVVVNYANSREAAEKVVDEIKSNGSDAISIQADVGDPDAVTKLMDQAVEHFGYLDIVSSNAGIVSFGHVKDVTPDEFDRVFRVNTRGQFFVAREAYRHLREGGRIILTSSNTASVKGVPRHAVYSGSKGAIDTFVRCLAIDCGDKKITVNAVAPGAIKTDMFLSVSREYIPNGETFTDEQVDECAAWLSPLNRVGLPVDVARVVSFLASDAAEWISGKIIGVDGGAFR.

The NADP(+) site is built by Ile-23, Asp-69, Asn-96, and Arg-129. Active-site proton donor residues include Ser-145 and Ser-146. NADP(+)-binding residues include Tyr-160, Lys-164, Ile-193, and Thr-195. The Proton acceptor role is filled by Tyr-160. Lys-164 acts as the Lowers pKa of active site Tyr in catalysis.

Belongs to the short-chain dehydrogenases/reductases (SDR) family.

It catalyses the reaction (4S,8R)-2,13,16,20-tetrahydroxy-7,9-dioxapentacyclo[10.8.0.0(3,10).0(4,8).0(14,19)]icosa-1(12),2,5,10,13,16,19-heptaen-18-one + NADPH + H(+) = (4S,8R,16R)-2,13,16,20-tetrahydroxy-7,9-dioxapentacyclo[10.8.0.0(3,10).0(4,8).0(14,19)]icosa-1(12),2,5,10,13,19-hexaen-18-one + NADP(+). Its pathway is mycotoxin biosynthesis; sterigmatocystin biosynthesis. Functionally, versicolorin reductase; part of the gene cluster that mediates the biosynthesis of sterigmatocystin (ST), a polyketide-derived furanocoumarin which is part of the most toxic and carcinogenic compounds among the known mycotoxins. The first step in the biosynthesis of sterigmatocystin is the production of hexanoate by the fatty acid synthase (FAS) units stcJ and stcK. The polyketide backbone is assembled by the non-reducing polyketide synthase stcA by condensation of the starter hexanoyl-CoA and 7 malonyl-CoA extender units followed by cyclization and release of norsolorinic acid. Norsolorinic acid is the first stable intermediate in the biosynthesis of sterigmatocystin and is converted into averantin (AVN) by the ketoreductase stcE which reduces the hexanoate ketone to an alcohol. Averantin is then oxidized into 5'-hydroxyaverantin (HAVN) by the cytochrome P450 monooxygenase stcF. 5'-hydroxyaverantin is further converted to 5'-oxyaverantin (OAVN) by the 5'-hydroxyaverantin dehydrogenase stcG. The next step is the conversion of OAVN into averufin (AVF) which is catalyzed by a yet to be identified enzyme. The cytochrome P450 monooxygenase stcB and the flavin-binding monooxygenase stcW are both required for the conversion of averufin to 1-hydroxyversicolorone. The esterase stcI probably catalyzes the formation of versiconal hemiacetal acetate from 1-hydroxyversicolorone. The oxydoreductase stcN then probably catalyzes the biosynthetic step from versiconal to versicolorin B (VERB). The next step is performed by the versicolorin B desaturase stcL to produce versicolorin A (VERA). The ketoreductase stcU and the cytochrome P450 monooxygenase stcS are involved in the conversion of versicolorin A to demethylsterigmatocystin. The Baeyer-Villiger oxidas stcQ and the reductase stcR might be involved in the biosynthetic step from versicolorin A to demethylsterigmatocystin. The final step in the biosynthesis of sterigmatocystin is the methylation of demethylsterigmatocystin catalyzed by the methyltransferase stcP. This chain is Versicolorin reductase stcU, found in Emericella nidulans (strain FGSC A4 / ATCC 38163 / CBS 112.46 / NRRL 194 / M139) (Aspergillus nidulans).